We begin with the raw amino-acid sequence, 119 residues long: Hydrogenase maturation factor HypA (119 aa).

Ni(2+) is bound at residue His2. 4 residues coordinate Zn(2+): Cys73, Cys76, Cys90, and Cys93.

It belongs to the HypA/HybF family.

Functionally, involved in the maturation of [NiFe] hydrogenases. Required for nickel insertion into the metal center of the hydrogenase. The polypeptide is Hydrogenase maturation factor HypA (Wolinella succinogenes (strain ATCC 29543 / DSM 1740 / CCUG 13145 / JCM 31913 / LMG 7466 / NCTC 11488 / FDC 602W) (Vibrio succinogenes)).